The following is a 981-amino-acid chain: Translation initiation factor IF-2 (981 aa).

Residues 31-370 (FVKSASSTVE…SKRAKRAEYE (340 aa)) are disordered. The span at 64 to 87 (GAAAPAARPAAKPGAPSPSAAKPG) shows a compositional bias: low complexity. Over residues 88 to 111 (GPRPGPKPAAPAPAAPAAPAPAAP) the composition is skewed to pro residues. Residues 112–121 (AAPAAAAPAA) are compositionally biased toward low complexity. Pro residues predominate over residues 136–145 (PAQPARPAPA). The span at 146–165 (APAASAPAAPAAPAAPSTGA) shows a compositional bias: low complexity. Residues 256–269 (RPSPGSMPPRPNPG) show a composition bias toward pro residues. Residues 270–279 (AMPARSARPA) show a composition bias toward low complexity. Positions 280–339 (PGGGGRPGRPGGAPGGRPGGGGGGYRGGGAPGAGAGAGAPGGAAPAGGFRGRPGGGGRPG) are enriched in gly residues. Basic residues predominate over residues 356–365 (RRGRKSKRAK). A tr-type G domain is found at 477 to 649 (SRPPVVTVMG…VLLTADASLD (173 aa)). The G1 stretch occupies residues 486–493 (GHVDHGKT). 486–493 (GHVDHGKT) contacts GTP. The G2 stretch occupies residues 511–515 (GITQH). The G3 stretch occupies residues 536–539 (DTPG). Residues 536–540 (DTPGH) and 590–593 (NKID) contribute to the GTP site. Positions 590-593 (NKID) are G4. Residues 626–628 (SAK) form a G5 region.

It belongs to the TRAFAC class translation factor GTPase superfamily. Classic translation factor GTPase family. IF-2 subfamily.

It is found in the cytoplasm. Its function is as follows. One of the essential components for the initiation of protein synthesis. Protects formylmethionyl-tRNA from spontaneous hydrolysis and promotes its binding to the 30S ribosomal subunits. Also involved in the hydrolysis of GTP during the formation of the 70S ribosomal complex. In Rhodococcus erythropolis (strain PR4 / NBRC 100887), this protein is Translation initiation factor IF-2.